A 1231-amino-acid polypeptide reads, in one-letter code: MNNQDAVASILHECKQVLDRLLLETPDVSTEDKSEDQRCRASLPSELRTLIQEAEEMKWPFVPEKWQYKQAMSPEDKTNLQDVIGAGLQQLLAALRASILVQDCAAASAIVFLMDRFLYGLDVSGKLLQVAKGLHKLKPATPIAPQVVIRQARVSVNSGKLLKAEYILSSLISNNGATGTWLYRNESDKVLVQSVCIQIRGQILQKLGMWYEAAELIWASVIGYLTLPQPDKKGISTSLGILADIFVSMSKTDYEKFKKSPKVNLALLKEFDHHLLSAAEACKLAAAFSAYTPLFVLRAVNIRGTCLLSYSCSADCPPGMKSVHLCEAKEAFEIGLLTKKDGELVSGKQELHSFIKAAFGLTTVHSRLHGETDAVRAARQLCSEAVGKLYTFSTSPTSQDREGLSQEIMSLISQVKGHLRVQSFPNLDVCSYVPESFKCGLDRLILHGHVDFQQILETYSQHHTSVCEVFESTCGNSKSNQRDTKSEVCITTLKTETNTADTMVATLERVSSQDSRSTASSKMSKKDQGKLQRERGRSWTRSKAFRVSLDLDMETETEPPNHSNGGTDVFNKSLRDNSSSCSWGRLSGLSSSTSWEEVNCAVQDVVRKGSGQEKHPVEAQSSEAVSEEPKRNRSSRAVFLSSKLRGVSLQTTGDDNLESSPSQLHNHTSILPFNAKDTCLASGAGLVETAEGSNNTSLQSSHSCGSDSWSLSSSDRFTDVTTNPSVQEEEPSGIMGDVPESKYDFKDWHGEKNGGTLTEICTGPELTFAPSSVDPEGETAESTDDGLSPSQVALGCLEGSHSMSTRRTFFPDGSVQNADSAKTGCSVRDQTVDPDASTVDEEGQMLDSTEVCSIGQDGAHRPRALRSGQSAEGPKSFVNGSRPSPIFDEDFSTTEEGEELGSMLKSSQNSSSYSPWWLKSPAFSRSSSDGESSWSLLNSSRSSFASLAGQTSQEILEARTLQPDDLEKLLAGVRHDWLLQRLENTGVLKSNQLQQAHSALLLKYSKKSELWTAQETVVYLGDYLKVKKKGKQRNAFWVHYLHQEETLGRYVGKEYKERKGLRHHFTDVERQMTAQHYVTEFNKRLYEQKIPTQIFYVPSTILLILEDRTIKGCISVEPYILGEFVKLSNNTKVVKNEYKATEYGLAYGHFSYEFSNHRDVVVDLQGWVTGNGKGLIYLTDPQIHSVDQKDVTTNFGKRGIFYFFNNQHASCNEICHRLSLTRPSLEQTSKV.

ADP-D-glycero-beta-D-manno-heptose-binding positions include Phe-61, Gln-67, Arg-116, 150 to 153, Asp-231, Lys-233, 236 to 237, and Phe-295; these read RQAR and ST. 6 disordered regions span residues 508 to 540, 609 to 637, 692 to 739, 767 to 791, 811 to 843, and 859 to 888; these read ERVSSQDSRSTASSKMSKKDQGKLQRERGRSWT, GSGQEKHPVEAQSSEAVSEEPKRNRSSRA, GSNN…GDVP, TFAPSSVDPEGETAESTDDGLSPSQ, PDGSVQNADSAKTGCSVRDQTVDPDASTVDEEG, and AHRPRALRSGQSAEGPKSFVNGSRPSPIFD. Positions 509–522 are enriched in polar residues; it reads RVSSQDSRSTASSK. The span at 524–537 shows a compositional bias: basic and acidic residues; it reads SKKDQGKLQRERGR. A compositionally biased stretch (low complexity) spans 700–714; the sequence is SSHSCGSDSWSLSSS. The span at 775-784 shows a compositional bias: acidic residues; sequence PEGETAESTD. Residues 1003-1223 form the Alpha-type protein kinase domain; the sequence is KYSKKSELWT…ICHRLSLTRP (221 aa).

The protein belongs to the protein kinase superfamily. Alpha-type protein kinase family. ALPK subfamily. As to expression, widely expressed. Expressed in the retina and in sweat glands, especially in the myoepithelial cells.

The protein resides in the cytoplasm. It localises to the cytosol. It is found in the cytoskeleton. The protein localises to the spindle pole. Its subcellular location is the microtubule organizing center. The protein resides in the centrosome. It localises to the cell projection. It is found in the cilium. It catalyses the reaction L-seryl-[protein] + ATP = O-phospho-L-seryl-[protein] + ADP + H(+). The enzyme catalyses L-threonyl-[protein] + ATP = O-phospho-L-threonyl-[protein] + ADP + H(+). Its activity is regulated as follows. Serine/threonine-protein kinase activity is stimulated upon ADP-D-glycero-beta-D-manno-heptose (ADP-Heptose)-binding. Its function is as follows. Serine/threonine-protein kinase that detects bacterial pathogen-associated molecular pattern metabolites (PAMPs) and initiates an innate immune response, a critical step for pathogen elimination and engagement of adaptive immunity. Specifically recognizes and binds ADP-D-glycero-beta-D-manno-heptose (ADP-Heptose), a potent PAMP present in all Gram-negative and some Gram-positive bacteria. ADP-Heptose-binding stimulates its kinase activity to phosphorylate and activate TIFA, triggering pro-inflammatory NF-kappa-B signaling. May be involved in monosodium urate monohydrate (MSU)-induced inflammation by mediating phosphorylation of unconventional myosin MYO9A. May also play a role in apical protein transport by mediating phosphorylation of unconventional myosin MYO1A. May play a role in ciliogenesis. This Mus musculus (Mouse) protein is Alpha-protein kinase 1.